The chain runs to 252 residues: 2-succinyl-6-hydroxy-2,4-cyclohexadiene-1-carboxylate synthase (252 aa).

The protein belongs to the AB hydrolase superfamily. MenH family. As to quaternary structure, monomer.

The enzyme catalyses 5-enolpyruvoyl-6-hydroxy-2-succinyl-cyclohex-3-ene-1-carboxylate = (1R,6R)-6-hydroxy-2-succinyl-cyclohexa-2,4-diene-1-carboxylate + pyruvate. Its pathway is quinol/quinone metabolism; 1,4-dihydroxy-2-naphthoate biosynthesis; 1,4-dihydroxy-2-naphthoate from chorismate: step 3/7. It participates in quinol/quinone metabolism; menaquinone biosynthesis. Its function is as follows. Catalyzes a proton abstraction reaction that results in 2,5-elimination of pyruvate from 2-succinyl-5-enolpyruvyl-6-hydroxy-3-cyclohexene-1-carboxylate (SEPHCHC) and the formation of 2-succinyl-6-hydroxy-2,4-cyclohexadiene-1-carboxylate (SHCHC). The chain is 2-succinyl-6-hydroxy-2,4-cyclohexadiene-1-carboxylate synthase from Salmonella paratyphi B (strain ATCC BAA-1250 / SPB7).